Here is a 90-residue protein sequence, read N- to C-terminus: Probable Fe(2+)-trafficking protein (90 aa).

The protein belongs to the Fe(2+)-trafficking protein family.

Could be a mediator in iron transactions between iron acquisition and iron-requiring processes, such as synthesis and/or repair of Fe-S clusters in biosynthetic enzymes. This is Probable Fe(2+)-trafficking protein from Paracidovorax citrulli (strain AAC00-1) (Acidovorax citrulli).